The primary structure comprises 201 residues: UPF0637 protein LSEI_1198 (201 aa).

This sequence belongs to the UPF0637 family.

This is UPF0637 protein LSEI_1198 from Lacticaseibacillus paracasei (strain ATCC 334 / BCRC 17002 / CCUG 31169 / CIP 107868 / KCTC 3260 / NRRL B-441) (Lactobacillus paracasei).